The sequence spans 307 residues: Taste receptor type 2 member 41 (307 aa).

Residues 1–7 (MQAALTA) are Extracellular-facing. The chain crosses the membrane as a helical span at residues 8-28 (FFMLLFSLLSLLGIAANGFIV). Residues 29–40 (LVLGREWLRYGR) are Cytoplasmic-facing. Residues 41 to 61 (LLPLDMILISLGASRFCLQLV) traverse the membrane as a helical segment. The Extracellular portion of the chain corresponds to 62-88 (GTVHNFYYSAQKVEYSGGLGRQFFHLH). Residues 89–109 (WHFLNSATFWFCSWLSVLFCV) form a helical membrane-spanning segment. Residues 110 to 129 (KIANITHPTFLWLKWRFPGW) lie on the Cytoplasmic side of the membrane. A helical transmembrane segment spans residues 130–150 (VPWLLLGSVLISFIITLLFFW). The Extracellular portion of the chain corresponds to 151–183 (VNYPAYQEFLIRKFSVNMTYKWNTRIETYYFPS). N167 carries N-linked (GlcNAc...) asparagine glycosylation. A helical membrane pass occupies residues 184–204 (LKLVIWSIPFSVFLVSIMLLI). Residues 205-234 (NSLRRHTQRMQHNGHSLQDPSTQAHTRALK) are Cytoplasmic-facing. A helical transmembrane segment spans residues 235–255 (SLISFLILYALSFLSLIIDAT). The Extracellular segment spans residues 256–264 (KFISMQNDF). Residues 265–285 (YWPWQIAVYLCISVHPFILIF) form a helical membrane-spanning segment. The Cytoplasmic segment spans residues 286 to 307 (SNLKLRSVFSQLLLLARGFWVA).

Belongs to the G-protein coupled receptor T2R family.

The protein resides in the membrane. Its function is as follows. Receptor that may play a role in the perception of bitterness and is gustducin-linked. May play a role in sensing the chemical composition of the gastrointestinal content. The activity of this receptor may stimulate alpha gustducin, mediate PLC-beta-2 activation and lead to the gating of TRPM5. This is Taste receptor type 2 member 41 (TAS2R41) from Pan troglodytes (Chimpanzee).